Here is a 409-residue protein sequence, read N- to C-terminus: Phosphopentomutase (409 aa).

Residues Asp-10, Asp-308, His-313, Asp-349, His-350, and His-361 each coordinate Mn(2+).

It belongs to the phosphopentomutase family. The cofactor is Mn(2+).

The protein resides in the cytoplasm. It carries out the reaction 2-deoxy-alpha-D-ribose 1-phosphate = 2-deoxy-D-ribose 5-phosphate. The catalysed reaction is alpha-D-ribose 1-phosphate = D-ribose 5-phosphate. It participates in carbohydrate degradation; 2-deoxy-D-ribose 1-phosphate degradation; D-glyceraldehyde 3-phosphate and acetaldehyde from 2-deoxy-alpha-D-ribose 1-phosphate: step 1/2. Functionally, isomerase that catalyzes the conversion of deoxy-ribose 1-phosphate (dRib-1-P) and ribose 1-phosphate (Rib-1-P) to deoxy-ribose 5-phosphate (dRib-5-P) and ribose 5-phosphate (Rib-5-P), respectively. This chain is Phosphopentomutase, found in Buchnera aphidicola subsp. Schizaphis graminum (strain Sg).